The following is a 155-amino-acid chain: 3-dehydroquinate dehydratase (155 aa).

Y22 acts as the Proton acceptor in catalysis. Substrate is bound by residues N73, H79, and D86. Catalysis depends on H99, which acts as the Proton donor. Substrate contacts are provided by residues 100-101 (IS) and R110.

Belongs to the type-II 3-dehydroquinase family. In terms of assembly, homododecamer.

The catalysed reaction is 3-dehydroquinate = 3-dehydroshikimate + H2O. It participates in metabolic intermediate biosynthesis; chorismate biosynthesis; chorismate from D-erythrose 4-phosphate and phosphoenolpyruvate: step 3/7. Its function is as follows. Catalyzes a trans-dehydration via an enolate intermediate. In Campylobacter hominis (strain ATCC BAA-381 / DSM 21671 / CCUG 45161 / LMG 19568 / NCTC 13146 / CH001A), this protein is 3-dehydroquinate dehydratase.